Here is a 312-residue protein sequence, read N- to C-terminus: Oxidoreductase NAD-binding domain-containing protein 1 (312 aa).

A signal peptide spans 1-17; that stretch reads MACAAVMIPGLLRCSVG. An FAD-binding FR-type domain is found at 50–186; it reads HMERTASVLR…GGVGINPLLS (137 aa). 178 to 183 contacts NAD(+); that stretch reads GVGINP.

The protein is Oxidoreductase NAD-binding domain-containing protein 1 (OXNAD1) of Homo sapiens (Human).